A 384-amino-acid chain; its full sequence is Transcription factor 7 (384 aa).

A compositionally biased stretch (gly residues) spans 1 to 16 (MPQLDSGGGGAGGGDD). The tract at residues 1–59 (MPQLDSGGGGAGGGDDLGAPDELLAFQDEGEEQDDKSRDSAAGPERDLAELKSSLVNES) is CTNNB1-binding. Disordered stretches follow at residues 1-88 (MPQL…LGRE), 133-183 (PPSG…QKQV), and 337-384 (SARD…MTVL). The span at 35 to 50 (DKSRDSAAGPERDLAE) shows a compositional bias: basic and acidic residues. The span at 62–78 (AAGGAGIPGVPGAGAGA) shows a compositional bias: gly residues. The segment at residues 269 to 337 (IKKPLNAFML…LHMQLYPGWS (69 aa)) is a DNA-binding region (HMG box). A Nuclear localization signal motif is present at residues 344-348 (KKKRR). Over residues 352–370 (KHQESTTGGKRNAFGTYPE) the composition is skewed to basic and acidic residues. A compositionally biased stretch (low complexity) spans 374–384 (APAPFLPMTVL).

Belongs to the TCF/LEF family. Binds the armadillo repeat of CTNNB1 and forms a stable complex. Interacts with TLE5, TLE1, TLE2, TLE3 and TLE4. Interacts with MLLT11. Long isoform interacts (via N-terminus) with SOX13; inhibits WNT-mediated transcriptional activity. Interacts with DAZAP2. In terms of tissue distribution, predominantly expressed in T-cells. Also detected in proliferating intestinal epithelial cells and in the basal epithelial cells of mammary gland epithelium.

The protein localises to the nucleus. In terms of biological role, transcriptional activator involved in T-cell lymphocyte differentiation. Necessary for the survival of CD4(+) CD8(+) immature thymocytes. Isoforms lacking the N-terminal CTNNB1 binding domain cannot fulfill this role. Binds to the T-lymphocyte-specific enhancer element (5'-WWCAAAG-3') found in the promoter of the CD3E gene. Represses expression of the T-cell receptor gamma gene in alpha-beta T-cell lineages. Required for the development of natural killer receptor-positive lymphoid tissue inducer T-cells. TLE1, TLE2, TLE3 and TLE4 repress transactivation mediated by TCF7 and CTNNB1. May also act as feedback transcriptional repressor of CTNNB1 and TCF7L2 target genes. The polypeptide is Transcription factor 7 (Homo sapiens (Human)).